The primary structure comprises 252 residues: Imidazole glycerol phosphate synthase subunit HisF (252 aa).

Residues Asp11 and Asp130 contribute to the active site.

The protein belongs to the HisA/HisF family. Heterodimer of HisH and HisF.

It is found in the cytoplasm. The enzyme catalyses 5-[(5-phospho-1-deoxy-D-ribulos-1-ylimino)methylamino]-1-(5-phospho-beta-D-ribosyl)imidazole-4-carboxamide + L-glutamine = D-erythro-1-(imidazol-4-yl)glycerol 3-phosphate + 5-amino-1-(5-phospho-beta-D-ribosyl)imidazole-4-carboxamide + L-glutamate + H(+). Its pathway is amino-acid biosynthesis; L-histidine biosynthesis; L-histidine from 5-phospho-alpha-D-ribose 1-diphosphate: step 5/9. IGPS catalyzes the conversion of PRFAR and glutamine to IGP, AICAR and glutamate. The HisF subunit catalyzes the cyclization activity that produces IGP and AICAR from PRFAR using the ammonia provided by the HisH subunit. The chain is Imidazole glycerol phosphate synthase subunit HisF from Staphylococcus saprophyticus subsp. saprophyticus (strain ATCC 15305 / DSM 20229 / NCIMB 8711 / NCTC 7292 / S-41).